A 375-amino-acid polypeptide reads, in one-letter code: Anhydro-N-acetylmuramic acid kinase (375 aa).

Residue 19–26 participates in ATP binding; it reads GTSLDGVD.

This sequence belongs to the anhydro-N-acetylmuramic acid kinase family.

It carries out the reaction 1,6-anhydro-N-acetyl-beta-muramate + ATP + H2O = N-acetyl-D-muramate 6-phosphate + ADP + H(+). It functions in the pathway amino-sugar metabolism; 1,6-anhydro-N-acetylmuramate degradation. The protein operates within cell wall biogenesis; peptidoglycan recycling. Its function is as follows. Catalyzes the specific phosphorylation of 1,6-anhydro-N-acetylmuramic acid (anhMurNAc) with the simultaneous cleavage of the 1,6-anhydro ring, generating MurNAc-6-P. Is required for the utilization of anhMurNAc either imported from the medium or derived from its own cell wall murein, and thus plays a role in cell wall recycling. In Ruegeria sp. (strain TM1040) (Silicibacter sp.), this protein is Anhydro-N-acetylmuramic acid kinase.